The primary structure comprises 593 residues: DNA mismatch repair protein MutL (593 aa).

This sequence belongs to the DNA mismatch repair MutL/HexB family.

Functionally, this protein is involved in the repair of mismatches in DNA. It is required for dam-dependent methyl-directed DNA mismatch repair. May act as a 'molecular matchmaker', a protein that promotes the formation of a stable complex between two or more DNA-binding proteins in an ATP-dependent manner without itself being part of a final effector complex. In Leptospira interrogans serogroup Icterohaemorrhagiae serovar copenhageni (strain Fiocruz L1-130), this protein is DNA mismatch repair protein MutL.